The following is a 350-amino-acid chain: GTP 3',8-cyclase (350 aa).

One can recognise a Radical SAM core domain in the interval 27 to 245 (TFGRIATDLR…LRAHFTLVPD (219 aa)). GTP is bound at residue arginine 36. [4Fe-4S] cluster contacts are provided by cysteine 43 and cysteine 47. Tyrosine 49 serves as a coordination point for S-adenosyl-L-methionine. A [4Fe-4S] cluster-binding site is contributed by cysteine 50. Arginine 87 provides a ligand contact to GTP. Glycine 91 is an S-adenosyl-L-methionine binding site. Threonine 118 contacts GTP. An S-adenosyl-L-methionine-binding site is contributed by serine 142. Residue lysine 179 coordinates GTP. S-adenosyl-L-methionine is bound at residue methionine 213. Cysteine 277 and cysteine 280 together coordinate [4Fe-4S] cluster. Residue 282 to 284 (RTR) participates in GTP binding. [4Fe-4S] cluster is bound at residue cysteine 294.

It belongs to the radical SAM superfamily. MoaA family. Monomer and homodimer. Requires [4Fe-4S] cluster as cofactor.

The enzyme catalyses GTP + AH2 + S-adenosyl-L-methionine = (8S)-3',8-cyclo-7,8-dihydroguanosine 5'-triphosphate + 5'-deoxyadenosine + L-methionine + A + H(+). It functions in the pathway cofactor biosynthesis; molybdopterin biosynthesis. Catalyzes the cyclization of GTP to (8S)-3',8-cyclo-7,8-dihydroguanosine 5'-triphosphate. The sequence is that of GTP 3',8-cyclase from Mycobacterium sp. (strain JLS).